The sequence spans 688 residues: Pescadillo homolog (688 aa).

Residues 351-470 enclose the BRCT domain; sequence EVASLFASFT…KLLRHDLYAP (120 aa). Disordered stretches follow at residues 411–442 and 496–688; these read RPPL…GTRM and AEQE…TKGR. Residues 412 to 424 are compositionally biased toward pro residues; it reads PPLPESALPPLPQ. Positions 496 to 536 form a coiled coil; the sequence is AEQESDGEAERQAEEENEEEESEVEGLSMDKEMVETENSEA. 4 stretches are compositionally biased toward acidic residues: residues 510–519, 530–544, 554–565, and 576–589; these read EENEEEESEV, ETEN…EESV, GSDDEEEESEED, and EAAD…DDEE. The span at 619 to 634 shows a compositional bias: basic residues; sequence KKSKKQKPLAKKHAAQ. Residues 627–686 are a coiled coil; it reads LAKKHAAQKKKEQEELERQKMMMSRKKRKLLDKMLYSNKKKDEEAEKLRRKRRKIEQGTK. Positions 635–646 are enriched in basic and acidic residues; it reads KKKEQEELERQK.

This sequence belongs to the pescadillo family. As to quaternary structure, component of the NOP7 complex, composed of ERB1, NOP7 and YTM1. The complex is held together by ERB1, which interacts with NOP7 via its N-terminal domain and with YTM1 via a high-affinity interaction between the seven-bladed beta-propeller domains of the 2 proteins. The NOP7 complex associates with the 66S pre-ribosome.

The protein resides in the nucleus. It is found in the nucleolus. It localises to the nucleoplasm. Functionally, component of the NOP7 complex, which is required for maturation of the 25S and 5.8S ribosomal RNAs and formation of the 60S ribosome. This Coccidioides immitis (strain RS) (Valley fever fungus) protein is Pescadillo homolog.